The following is a 321-amino-acid chain: Malate dehydrogenase (321 aa).

NAD(+)-binding positions include 10-15 (GSGMIG) and aspartate 34. Substrate contacts are provided by arginine 83 and arginine 89. Residues asparagine 96 and 119 to 121 (ITN) contribute to the NAD(+) site. Residues asparagine 121 and arginine 152 each contribute to the substrate site. The Proton acceptor role is filled by histidine 176.

The protein belongs to the LDH/MDH superfamily. MDH type 3 family.

The catalysed reaction is (S)-malate + NAD(+) = oxaloacetate + NADH + H(+). Catalyzes the reversible oxidation of malate to oxaloacetate. The chain is Malate dehydrogenase from Chelativorans sp. (strain BNC1).